The following is a 327-amino-acid chain: Phenylalanine--tRNA ligase alpha subunit (327 aa).

E252 serves as a coordination point for Mg(2+).

It belongs to the class-II aminoacyl-tRNA synthetase family. Phe-tRNA synthetase alpha subunit type 1 subfamily. In terms of assembly, tetramer of two alpha and two beta subunits. Mg(2+) serves as cofactor.

It localises to the cytoplasm. It catalyses the reaction tRNA(Phe) + L-phenylalanine + ATP = L-phenylalanyl-tRNA(Phe) + AMP + diphosphate + H(+). The sequence is that of Phenylalanine--tRNA ligase alpha subunit from Shewanella amazonensis (strain ATCC BAA-1098 / SB2B).